The primary structure comprises 160 residues: Putative 4-hydroxy-4-methyl-2-oxoglutarate aldolase (160 aa).

Residues 75–78 (GDQL) and R97 each bind substrate. D98 lines the a divalent metal cation pocket.

The protein belongs to the class II aldolase/RraA-like family. Homotrimer. The cofactor is a divalent metal cation.

It carries out the reaction 4-hydroxy-4-methyl-2-oxoglutarate = 2 pyruvate. It catalyses the reaction oxaloacetate + H(+) = pyruvate + CO2. Its function is as follows. Catalyzes the aldol cleavage of 4-hydroxy-4-methyl-2-oxoglutarate (HMG) into 2 molecules of pyruvate. Also contains a secondary oxaloacetate (OAA) decarboxylase activity due to the common pyruvate enolate transition state formed following C-C bond cleavage in the retro-aldol and decarboxylation reactions. This Vibrio vulnificus (strain YJ016) protein is Putative 4-hydroxy-4-methyl-2-oxoglutarate aldolase.